We begin with the raw amino-acid sequence, 502 residues long: Pentatricopeptide repeat-containing protein At4g01990, mitochondrial (502 aa).

The transit peptide at 1–13 (MMHSVSRLARRFC) directs the protein to the mitochondrion. PPR repeat units lie at residues 139 to 173 (NQSTYGSLLNCYCVEKEEVKAKAHFENMVDLNHVS), 174 to 208 (NSLPFNNLMAMYMGLGQPEKVPALVVAMKEKSITP), 209 to 243 (CDITYSMWIQSCGSLKDLDGVEKVLDEMKAEGEGI), 245 to 275 (SWNTFANLAAIYIKVGLYGKAEEALKSLENN), 280 to 310 (VRDCYHFLINLYTGIANASEVYRVWDLLKKR), 315 to 345 (NNSSYLTMLRALSKLDDIDGVKKVFAEWEST), and 350 to 381 (DMRMANVAISSYLKQNMYEEAEAVFNGAMKKC).

Belongs to the PPR family. P subfamily.

It localises to the mitochondrion. In Arabidopsis thaliana (Mouse-ear cress), this protein is Pentatricopeptide repeat-containing protein At4g01990, mitochondrial.